Consider the following 337-residue polypeptide: MEIPKDEKIKFLKELVEIYSPTGKEEEAAKFIKEKLEEYGVKAYIDKVGNVIGVKEGEGPLILLAGHVDTVPGYIPVRIEGDILWGRGSVDAKGPLSALLFAMVESNANVIFAGLVDEEGFSKGARALDVPRPEYVIVGEPSGVNGVTIGYKGSLTVRFVERVEKFHGSIGGGAAEKLIERWLSISGNFEDGFNGLSGRIVRFVAYERDFEFYGEMIVNLRTPPGYEPPRDWDIIDFVPAYEVNRRSPLVRTFVRSIRELGMKPKLKKKSGTADMNILAPRFGVDAVAYGPGDSRLDHTPYERISLMEYLQSIDVLKNVLTKLKGKDLDKIYKSSPR.

Position 67 (histidine 67) interacts with Zn(2+). Aspartate 69 is an active-site residue. Position 91 (aspartate 91) interacts with Zn(2+). The active-site Proton acceptor is glutamate 118. 3 residues coordinate Zn(2+): glutamate 119, glutamate 140, and histidine 298.

This sequence belongs to the peptidase M20A family. LysK subfamily. The cofactor is Zn(2+). Requires Co(2+) as cofactor.

The protein localises to the cytoplasm. It catalyses the reaction [amino-group carrier protein]-C-terminal-gamma-(L-lysyl)-L-glutamate + H2O = [amino-group carrier protein]-C-terminal-L-glutamate + L-lysine. The enzyme catalyses [amino-group carrier protein]-C-terminal-gamma-(L-ornithyl)-L-glutamate + H2O = [amino-group carrier protein]-C-terminal-L-glutamate + L-ornithine. It functions in the pathway amino-acid biosynthesis; L-lysine biosynthesis via AAA pathway; L-lysine from L-alpha-aminoadipate (Thermus route): step 5/5. The protein operates within amino-acid biosynthesis; L-arginine biosynthesis. In terms of biological role, catalyzes the release of L-lysine from [LysW]-gamma-L-lysine and the release of L-ornithine from [LysW]-L-ornithine. The protein is Putative [LysW]-lysine/[LysW]-ornithine hydrolase of Pyrococcus abyssi (strain GE5 / Orsay).